Here is a 960-residue protein sequence, read N- to C-terminus: Semaphorin-6C (960 aa).

The first 23 residues, 1–23 (MPRAPHSMPLLLLLLLSLPQAQT), serve as a signal peptide directing secretion. The Extracellular portion of the chain corresponds to 24–635 (AFPQDPIPLL…ASASRSIPIP (612 aa)). The region spanning 29-515 (PIPLLTSDLQ…FPGCIVYLSL (487 aa)) is the Sema domain. N-linked (GlcNAc...) asparagine glycosylation is present at asparagine 69. Disulfide bonds link cysteine 110–cysteine 120, cysteine 138–cysteine 147, cysteine 261–cysteine 372, and cysteine 286–cysteine 331. N-linked (GlcNAc...) asparagine glycosylation is present at asparagine 285. The N-linked (GlcNAc...) asparagine glycan is linked to asparagine 436. Disulfide bonds link cysteine 478/cysteine 509, cysteine 518/cysteine 536, cysteine 524/cysteine 569, and cysteine 528/cysteine 544. The interval 555-624 (VDLTGNQESM…HTQGVRRDLS (70 aa)) is disordered. A helical transmembrane segment spans residues 636–656 (LLLACVAAAFALGASVSGLLV). The Cytoplasmic segment spans residues 657–960 (SCACRRANRR…PAPHGSHFNF (304 aa)). Disordered stretches follow at residues 685-725 (LARL…SPPE), 745-792 (ASGG…PGQE), and 806-960 (HGPQ…HFNF). Positions 899-909 (RVPSGGPSRYS) are enriched in low complexity. Basic and acidic residues predominate over residues 922 to 935 (PDGHRGRSLKRVDV). Residues 940 to 952 (SPKPPLATPPQPA) are compositionally biased toward pro residues.

It belongs to the semaphorin family. As to expression, expressed in many regions of the developing nervous system, probably in neurons and their precursors, but also in nonneural tissue such as immature muscle and dermis. In adult, strong expression in the skeletal muscle and moderate expression in the brain, where cerebellum shows the highest expression. Also expressed in almost all areas of the CNS.

The protein resides in the cell membrane. Functionally, shows growth cone collapsing activity on dorsal root ganglion (DRG) neurons in vitro. May be a stop signal for the DRG neurons in their target areas, and possibly also for other neurons. May also be involved in the maintenance and remodeling of neuronal connections. This is Semaphorin-6C (Sema6c) from Rattus norvegicus (Rat).